Consider the following 594-residue polypeptide: Dual specificity protein phosphatase CDC14A (594 aa).

The interval 7–162 is a; sequence ELIGACEFMK…GLQHGFFDFE (156 aa). The segment at 163-176 is linker; the sequence is TFDVDEYEHYERVE. The tract at residues 177–343 is b; it reads NGDFNWIVPG…QGDIFRSKLK (167 aa). Residues 179-336 form the Tyrosine-protein phosphatase domain; sequence DFNWIVPGKF…KQASLWVQGD (158 aa). Catalysis depends on Cys-278, which acts as the Phosphocysteine intermediate. The tract at residues 396–435 is disordered; the sequence is GDKLRALKSQRQPRTSPSCAFRSDDTKGHPRAVSQPFRLS. Positions 404–413 are enriched in polar residues; that stretch reads SQRQPRTSPS. A Phosphoserine modification is found at Ser-484. Residues 487 to 560 form a disordered region; that stretch reads NLNAATDDPE…PGPHSAKTEE (74 aa). Positions 500–531 are enriched in polar residues; the sequence is TSSSSKAGFTASPFTNLLNGSSQPTTRNYPEL. A compositionally biased stretch (low complexity) spans 532–549; that stretch reads NNNQYNRSSNSNGGNLNS. Phosphoserine is present on Ser-583.

The protein belongs to the protein-tyrosine phosphatase family. Non-receptor class CDC14 subfamily. Interacts with KIF20A, which is required to localize CDC14 to the midzone of the mitotic spindle.

It localises to the nucleus. Its subcellular location is the cytoplasm. The protein localises to the cytoskeleton. The protein resides in the microtubule organizing center. It is found in the centrosome. It localises to the spindle pole. Its subcellular location is the spindle. The protein localises to the cell projection. The protein resides in the kinocilium. It is found in the stereocilium. The catalysed reaction is O-phospho-L-tyrosyl-[protein] + H2O = L-tyrosyl-[protein] + phosphate. It carries out the reaction O-phospho-L-seryl-[protein] + H2O = L-seryl-[protein] + phosphate. It catalyses the reaction O-phospho-L-threonyl-[protein] + H2O = L-threonyl-[protein] + phosphate. In terms of biological role, dual-specificity phosphatase. Required for centrosome separation and productive cytokinesis during cell division. Dephosphorylates SIRT2 around early anaphase. May dephosphorylate the APC subunit FZR1/CDH1, thereby promoting APC-FZR1 dependent degradation of mitotic cyclins and subsequent exit from mitosis. Required for normal hearing. This Homo sapiens (Human) protein is Dual specificity protein phosphatase CDC14A (CDC14A).